The sequence spans 560 residues: SWI/SNF complex subunit SWI3A homolog (560 aa).

The span at 1–13 shows a compositional bias: low complexity; that stretch reads MSPPVAGAASSGD. Residues 1-22 are disordered; sequence MSPPVAGAASSGDGPPGRPPRE. One can recognise an SWIRM domain in the interval 24-127; it reads YTIPASSGWF…FSASPSRPEA (104 aa). In terms of domain architecture, SANT spans 242-293; the sequence is HSSSAWTDAETLLLLEGVLKHGDDWDLIAQHVRTKNKSECIARLIQLPFGEH. The span at 311-330 shows a compositional bias: polar residues; sequence TTDGKVNKSTVKESSSQPTE. Disordered regions lie at residues 311–352 and 414–445; these read TTDG…EEHP and QTRA…PDKK. A compositionally biased stretch (acidic residues) spans 331 to 342; it reads TVDDMQIDGNED. Basic and acidic residues-rich tracts occupy residues 343-352 and 424-445; these read GADKSVEEHP and RQSD…PDKK.

As to quaternary structure, interacts with LFR.

Its subcellular location is the nucleus. In terms of biological role, component of a multiprotein complex equivalent of the SWI/SNF complex, an ATP-dependent chromatin-remodeling complex, which is required for the positive and negative regulation of gene expression of a large number of genes. It changes chromatin structure by altering DNA-histone contacts within a nucleosome, leading eventually to a change in nucleosome position, thus facilitating or repressing binding of gene-specific transcription factors. The polypeptide is SWI/SNF complex subunit SWI3A homolog (Oryza sativa subsp. japonica (Rice)).